The sequence spans 428 residues: CRS2-associated factor 1, mitochondrial (428 aa).

A mitochondrion-targeting transit peptide spans 1–21; sequence MLLLAGLLRRARPPRRPSVRR. 2 disordered regions span residues 33-100 and 129-152; these read PPAS…REPK and HADDPAPAAERELEEARRRERERV. CRM domains are found at residues 155-253 and 275-371; these read EPLT…KRPV and EGLT…IQDN. Positions 378 to 428 are disordered; it reads SVLEEESAGAESENGDQEQASSDWASDECSQLSSSDEMPDDKSAISEADSD. The segment covering 380–393 has biased composition (acidic residues); the sequence is LEEESAGAESENGD. Residues 394–413 show a composition bias toward polar residues; the sequence is QEQASSDWASDECSQLSSSD.

In terms of assembly, part of large ribonucleo-protein complexes that include group IIB introns.

Its subcellular location is the mitochondrion. Functionally, may be involved in the splicing of group IIB introns in mitochondria. This chain is CRS2-associated factor 1, mitochondrial, found in Oryza sativa subsp. japonica (Rice).